Consider the following 338-residue polypeptide: tRNA pseudouridine synthase D (338 aa).

Catalysis depends on Asp79, which acts as the Nucleophile. The TRUD domain occupies 154 to 303 (GVPNYFGEQR…EEAWRANILY (150 aa)).

It belongs to the pseudouridine synthase TruD family.

It catalyses the reaction uridine(13) in tRNA = pseudouridine(13) in tRNA. Its function is as follows. Responsible for synthesis of pseudouridine from uracil-13 in transfer RNAs. This chain is tRNA pseudouridine synthase D, found in Legionella pneumophila (strain Lens).